The sequence spans 612 residues: UvrABC system protein C (612 aa).

The GIY-YIG domain occupies 11–90 (TASGVYLMKG…IKKYRPRYNI (80 aa)). In terms of domain architecture, UVR spans 200–235 (SEVVESLQHQMAAAAERMAFEEAARLRDQLRAIEQT).

Belongs to the UvrC family. In terms of assembly, interacts with UvrB in an incision complex.

It localises to the cytoplasm. Functionally, the UvrABC repair system catalyzes the recognition and processing of DNA lesions. UvrC both incises the 5' and 3' sides of the lesion. The N-terminal half is responsible for the 3' incision and the C-terminal half is responsible for the 5' incision. This Syntrophotalea carbinolica (strain DSM 2380 / NBRC 103641 / GraBd1) (Pelobacter carbinolicus) protein is UvrABC system protein C.